A 566-amino-acid chain; its full sequence is 4-hydroxy-7-methoxy-3-oxo-3,4-dihydro-2H-1,4-benzoxazin-2-yl glucoside beta-D-glucosidase 1, chloroplastic (566 aa).

The N-terminal 54 residues, 1–54, are a transit peptide targeting the chloroplast; it reads MAPLLAAAMNHAAAHPGLRSHLVGPNNESFSRHHLPSSSPQSSKRRCNLSFTTR. The tract at residues 17 to 47 is disordered; the sequence is GLRSHLVGPNNESFSRHHLPSSSPQSSKRRC. Residues glutamine 92, histidine 196, and 244–245 each bind a beta-D-glucoside; that span reads NE. Glutamate 245 (proton donor) is an active-site residue. Cysteine 264 and cysteine 270 form a disulfide bridge. Positions 325–361 are dimerization; sequence SFLDKQAEERSWDINLGWFLEPVVRGDYPFSMRSLAR. A beta-D-glucoside is bound at residue tyrosine 387. Dimerization regions lie at residues 394–405 and 450–453; these read NIDISPNYSPVL and KYGN. A beta-D-glucoside contacts are provided by residues glutamate 460, tryptophan 511, 518–519, and tyrosine 527; that span reads EW. Residue glutamate 460 is the Nucleophile of the active site.

The protein belongs to the glycosyl hydrolase 1 family. Homo- and heterodimer. Expressed in all seedling parts. Most abundant in the coleoptile.

Its subcellular location is the plastid. It is found in the chloroplast. The catalysed reaction is Hydrolysis of terminal, non-reducing beta-D-glucosyl residues with release of beta-D-glucose.. It carries out the reaction DIMBOA beta-D-glucoside + H2O = DIMBOA + D-glucose. It catalyses the reaction DIBOA beta-D-glucoside + H2O = DIBOA + D-glucose. With respect to regulation, reversibly inhibited by micromolar concentrations of Hg(2+) or Ag(+), but irreversibly inhibited by alkylation in presence of urea. Competitive inhibition by p-nitrophenyl beta-D-thioglucoside (pNPTGlc), glucotetrazole, and para-hydroxy-S-mandelonitrile beta-glucoside (dhurrin). Its function is as follows. Is implicated in many functions such as ABA metabolism, hydrolysis of conjugated gibberellins, conversion of storage forms of cytokinins to active forms. Also acts in defense of young plant parts against pests via the production of hydroxamic acids from hydroxamic acid glucosides. Enzymatic activity is highly correlated with plant growth. The preferred substrate is DIMBOA-beta-D-glucoside. Hydrolyzes the chromogenic substrate 6-bromo-2-naphthyl-beta-D-glucoside (6BNGlc) and various artificial aryl beta-glucosides. No activity with cellobiose, arbutin, gentiobiose, linamarin or dhurrin as substrates. This is 4-hydroxy-7-methoxy-3-oxo-3,4-dihydro-2H-1,4-benzoxazin-2-yl glucoside beta-D-glucosidase 1, chloroplastic (GLU1) from Zea mays (Maize).